The following is a 329-amino-acid chain: Adenylate isopentenyltransferase (329 aa).

ATP-binding positions include 37 to 44 (GATGTGKS), Lys-63, Thr-74, 129 to 131 (SNS), 220 to 222 (KAI), and Lys-313.

The protein belongs to the IPP transferase family. Mg(2+) serves as cofactor. Expressed in roots, stems, leaves and cones.

It carries out the reaction dimethylallyl diphosphate + AMP = N(6)-(dimethylallyl)adenosine 5'-phosphate + diphosphate. It catalyses the reaction dimethylallyl diphosphate + ADP = N(6)-(dimethylallyl)adenosine 5'-diphosphate + diphosphate. The catalysed reaction is dimethylallyl diphosphate + ATP = N(6)-(dimethylallyl)adenosine 5'-triphosphate + diphosphate. Involved in cytokinin biosynthesis. Catalyzes the transfer of an isopentenyl group from dimethylallyl diphosphate (DMAPP) to ATP, ADP and AMP. GMP, IMP, CMP or UMP are not used as substrates. The chain is Adenylate isopentenyltransferase from Humulus lupulus (European hop).